The primary structure comprises 128 residues: MADMAKFEEEISKLKTLEKDREKYFSSRQEMEMRLTESKNVKAELDLMDSDSKVYKLMGPVLVRQDLEEARSTVEKRLEFIESEIKRVEASITDVNKKSIEQRDKVMNMQKAFQMMATQAQQQAAQKK.

The protein belongs to the prefoldin subunit beta family. In terms of assembly, heterohexamer of two PFD-alpha type and four PFD-beta type subunits.

The protein localises to the cytoplasm. Functionally, binds specifically to cytosolic chaperonin (c-CPN) and transfers target proteins to it. Binds to nascent polypeptide chain and promotes folding in an environment in which there are many competing pathways for nonnative proteins. Required for positioning of the mitotic spindle. The sequence is that of Probable prefoldin subunit 6 from Caenorhabditis briggsae.